A 321-amino-acid polypeptide reads, in one-letter code: Anther-specific protein TA-29 (321 aa).

The disordered stretch occupies residues 301-321 (RSDEEEAHHQSKQHKDEDIIN).

In terms of tissue distribution, anther specific (tapetal cells).

The sequence is that of Anther-specific protein TA-29 (TA-29) from Nicotiana tabacum (Common tobacco).